Consider the following 93-residue polypeptide: Small ribosomal subunit protein uS19 (93 aa).

This sequence belongs to the universal ribosomal protein uS19 family.

Protein S19 forms a complex with S13 that binds strongly to the 16S ribosomal RNA. This Thermoanaerobacter pseudethanolicus (strain ATCC 33223 / 39E) (Clostridium thermohydrosulfuricum) protein is Small ribosomal subunit protein uS19.